The primary structure comprises 334 residues: B3 domain-containing protein LOC_Os12g40090 (334 aa).

Residues 5-102 (RIRFFRLMTG…SFDVLIFDAS (98 aa)) constitute a DNA-binding region (TF-B3 1). The disordered stretch occupies residues 142 to 178 (TSTPSVLIGSPHKASTSKKLSGKTKTNPRKEPEDPNC). Positions 154 to 166 (KASTSKKLSGKTK) are enriched in low complexity. The TF-B3 2 DNA-binding region spans 227 to 326 (FVVVLQTAHV…TMTVHVIGKA (100 aa)).

It is found in the nucleus. In Oryza sativa subsp. japonica (Rice), this protein is B3 domain-containing protein LOC_Os12g40090.